A 386-amino-acid chain; its full sequence is Ribosomal RNA small subunit methyltransferase H (386 aa).

S-adenosyl-L-methionine-binding positions include 97–99 (GGH), D116, Y143, D167, and Q174.

It belongs to the methyltransferase superfamily. RsmH family.

It localises to the cytoplasm. It catalyses the reaction cytidine(1402) in 16S rRNA + S-adenosyl-L-methionine = N(4)-methylcytidine(1402) in 16S rRNA + S-adenosyl-L-homocysteine + H(+). In terms of biological role, specifically methylates the N4 position of cytidine in position 1402 (C1402) of 16S rRNA. In Mycolicibacterium paratuberculosis (strain ATCC BAA-968 / K-10) (Mycobacterium paratuberculosis), this protein is Ribosomal RNA small subunit methyltransferase H.